The following is a 312-amino-acid chain: Acetyl-coenzyme A carboxylase carboxyl transferase subunit alpha (312 aa).

The region spanning 36–286 (RLEKEVKSIY…KEYFLDALRT (251 aa)) is the CoA carboxyltransferase C-terminal domain.

Belongs to the AccA family. Acetyl-CoA carboxylase is a heterohexamer composed of biotin carboxyl carrier protein (AccB), biotin carboxylase (AccC) and two subunits each of ACCase subunit alpha (AccA) and ACCase subunit beta (AccD).

The protein resides in the cytoplasm. It carries out the reaction N(6)-carboxybiotinyl-L-lysyl-[protein] + acetyl-CoA = N(6)-biotinyl-L-lysyl-[protein] + malonyl-CoA. The protein operates within lipid metabolism; malonyl-CoA biosynthesis; malonyl-CoA from acetyl-CoA: step 1/1. Component of the acetyl coenzyme A carboxylase (ACC) complex. First, biotin carboxylase catalyzes the carboxylation of biotin on its carrier protein (BCCP) and then the CO(2) group is transferred by the carboxyltransferase to acetyl-CoA to form malonyl-CoA. This chain is Acetyl-coenzyme A carboxylase carboxyl transferase subunit alpha, found in Helicobacter pylori (strain P12).